Here is a 358-residue protein sequence, read N- to C-terminus: S-adenosylmethionine:tRNA ribosyltransferase-isomerase (358 aa).

The protein belongs to the QueA family. Monomer.

The protein resides in the cytoplasm. The enzyme catalyses 7-aminomethyl-7-carbaguanosine(34) in tRNA + S-adenosyl-L-methionine = epoxyqueuosine(34) in tRNA + adenine + L-methionine + 2 H(+). It functions in the pathway tRNA modification; tRNA-queuosine biosynthesis. Its function is as follows. Transfers and isomerizes the ribose moiety from AdoMet to the 7-aminomethyl group of 7-deazaguanine (preQ1-tRNA) to give epoxyqueuosine (oQ-tRNA). The chain is S-adenosylmethionine:tRNA ribosyltransferase-isomerase from Chelativorans sp. (strain BNC1).